A 312-amino-acid polypeptide reads, in one-letter code: Very-long-chain 3-oxoacyl-CoA reductase-like protein At1g24470 (312 aa).

The helical transmembrane segment at 14 to 34 threads the bilayer; it reads LHFVCFIGFLFLLRVLFIPLL. 52 to 81 is an NADP(+) binding site; that stretch reads GSWAMVTGATEGIGRAFAHELAKHGLNLIL. S190 provides a ligand contact to substrate. Y205 (proton acceptor) is an active-site residue.

Belongs to the short-chain dehydrogenases/reductases (SDR) family. In terms of tissue distribution, expressed in green siliques, flowers, inflorescence stems and leaves. Not detected in roots.

It is found in the endoplasmic reticulum membrane. Probable reductase, but unlike KCR1, has no beta-ketoacyl-coenzyme A reductase activity. The polypeptide is Very-long-chain 3-oxoacyl-CoA reductase-like protein At1g24470 (KCR2) (Arabidopsis thaliana (Mouse-ear cress)).